The sequence spans 184 residues: Putative axial regulator YABBY 2 (184 aa).

Residues 15-42 (CSFCTTILAVSVPYASLFTLVTVRCGHC) form a C4-type zinc finger. 2 stretches are compositionally biased toward polar residues: residues 76 to 94 (LVTR…NLSE) and 171 to 184 (LDQS…NGYY). 2 disordered regions span residues 76–115 (LVTR…RQRV) and 162–184 (LDGN…NGYY).

Belongs to the YABBY family. As to quaternary structure, interacts with SPL/NZZ and SPEAR2. Expressed at low levels in abaxial regions of lateral aerial organ primordia leading to cotyledons, leaves, flower meristems, sepals, petals, stamen and carpels, but not in roots.

It localises to the nucleus. In terms of biological role, involved in the abaxial cell fate determination during embryogenesis and organogenesis. The protein is Putative axial regulator YABBY 2 (YAB2) of Arabidopsis thaliana (Mouse-ear cress).